The following is a 60-amino-acid chain: Protein K12 (60 aa).

This Human herpesvirus 8 type P (isolate GK18) (HHV-8) protein is Protein K12 (K12).